Reading from the N-terminus, the 277-residue chain is Caspase-3 (277 aa).

The residue at position 1 (Met1) is an N-acetylmethionine. Propeptides lie at residues 1 to 9 (MENSENSVD) and 10 to 28 (AKSI…KSMD). The residue at position 11 (Lys11) is an N6-acetyllysine. Position 26 is a phosphoserine (Ser26). Catalysis depends on residues His121 and Cys163. Cys163 carries the S-nitrosocysteine; in inhibited form modification.

The protein belongs to the peptidase C14A family. In terms of assembly, heterotetramer that consists of two anti-parallel arranged heterodimers, each one formed by a 17 kDa (p17) and a 12 kDa (p12) subunit. Interacts with BIRC6/bruce. Cleavage by granzyme B, caspase-6, caspase-8 and caspase-10 generates the two active subunits. Additional processing of the propeptides is likely due to the autocatalytic activity of the activated protease. Active heterodimers between the small subunit of caspase-7 protease and the large subunit of caspase-3 also occur and vice versa. In terms of processing, S-nitrosylated on its catalytic site cysteine in unstimulated cell lines and denitrosylated upon activation of the Fas apoptotic pathway, associated with an increase in intracellular caspase activity. Fas therefore activates caspase-3 not only by inducing the cleavage of the caspase zymogen to its active subunits, but also by stimulating the denitrosylation of its active site thiol. Post-translationally, ubiquitinated by BIRC6; this activity is inhibited by DIABLO/SMAC.

It is found in the cytoplasm. The enzyme catalyses Strict requirement for an Asp residue at positions P1 and P4. It has a preferred cleavage sequence of Asp-Xaa-Xaa-Asp-|- with a hydrophobic amino-acid residue at P2 and a hydrophilic amino-acid residue at P3, although Val or Ala are also accepted at this position.. With respect to regulation, inhibited by BIRC6; following inhibition of BIRC6-caspase binding by DIABLO/SMAC, BIRC6 is subjected to caspase cleavage, leading to an increase in active caspases. In terms of biological role, involved in the activation cascade of caspases responsible for apoptosis execution. At the onset of apoptosis, it proteolytically cleaves poly(ADP-ribose) polymerase PARP1 at a '216-Asp-|-Gly-217' bond. Cleaves and activates sterol regulatory element binding proteins (SREBPs) between the basic helix-loop-helix leucine zipper domain and the membrane attachment domain. Cleaves and activates caspase-6, -7 and -9 (CASP6, CASP7 and CASP9, respectively). Cleaves and inactivates interleukin-18 (IL18). Triggers cell adhesion in sympathetic neurons through RET cleavage. Cleaves IL-1 beta between an Asp and an Ala, releasing the mature cytokine which is involved in a variety of inflammatory processes. Cleaves and inhibits serine/threonine-protein kinase AKT1 in response to oxidative stress. Acts as an inhibitor of type I interferon production during virus-induced apoptosis by mediating cleavage of antiviral proteins CGAS, IRF3 and MAVS, thereby preventing cytokine overproduction. Also involved in pyroptosis by mediating cleavage and activation of gasdermin-E (GSDME). Cleaves XRCC4 and phospholipid scramblase proteins XKR4, XKR8 and XKR9, leading to promote phosphatidylserine exposure on apoptotic cell surface. Cleaves BIRC6 following inhibition of BIRC6-caspase binding by DIABLO/SMAC. The chain is Caspase-3 (CASP3) from Felis catus (Cat).